Consider the following 694-residue polypeptide: GRB2-associated-binding protein 1 (694 aa).

At serine 2 the chain carries N-acetylserine. A PH domain is found at 5 to 116; it reads EVVCSGWLRK…WVRCICDICG (112 aa). Residues 194-203 show a composition bias toward basic and acidic residues; the sequence is PEPTRTHADS. The tract at residues 194-231 is disordered; the sequence is PEPTRTHADSAKSTSSETDCNDNVPSHKNPASSQSKHG. Residues 204 to 230 are compositionally biased toward polar residues; the sequence is AKSTSSETDCNDNVPSHKNPASSQSKH. A phosphoserine mark is found at serine 251, serine 253, serine 266, and serine 304. Positions 309–378 are disordered; that stretch reads IPPTPGNTYQ…TDSSYCIPTA (70 aa). The span at 358–374 shows a compositional bias: polar residues; that stretch reads DTCSITRTASDTDSSYC. At threonine 387 the chain carries Phosphothreonine. Serine 402 and serine 454 each carry phosphoserine. Disordered regions lie at residues 492–532 and 560–656; these read PAHM…VKPA and DSSR…ADER. Residues 594–611 show a composition bias toward polar residues; sequence PNLSSEDSNLFGSNSLDG. Residue tyrosine 627 is modified to Phosphotyrosine. A Phosphothreonine modification is found at threonine 638. Serine 651 is modified (phosphoserine). Tyrosine 659 carries the phosphotyrosine modification. Residues 668–694 are disordered; it reads LALKSTREAWTDGRQSTESETPAKNVK. The span at 672-684 shows a compositional bias: basic and acidic residues; that stretch reads STREAWTDGRQST. Serine 683 carries the post-translational modification Phosphoserine. Residues 685–694 show a composition bias toward polar residues; it reads ESETPAKNVK.

This sequence belongs to the GAB family. As to quaternary structure, identified in a complex containing FRS2, GRB2, GAB1, PIK3R1 and SOS1. Forms a tripartite complex containing GAB1, METTL13 and SPRY2. Within the complex interacts with METTL13. Interacts with GRB2 and with other SH2-containing proteins. Interacts with phosphorylated LAT2. Interacts with PTPRJ. Interacts (phosphorylated) with PTPN11. Interacts with HCK. Post-translationally, phosphorylated in response to FGFR1 activation. Phosphorylated on tyrosine residue(s) by the epidermal growth factor receptor (EGFR) and the insulin receptor (INSR). Tyrosine phosphorylation of GAB1 mediates interaction with several proteins that contain SH2 domains. Phosphorylated on tyrosine residues by HCK upon IL6 signaling.

In terms of biological role, adapter protein that plays a role in intracellular signaling cascades triggered by activated receptor-type kinases. Plays a role in FGFR1 signaling. Probably involved in signaling by the epidermal growth factor receptor (EGFR) and the insulin receptor (INSR). Involved in the MET/HGF-signaling pathway. This Bos taurus (Bovine) protein is GRB2-associated-binding protein 1 (GAB1).